Reading from the N-terminus, the 292-residue chain is Phosphatidylserine decarboxylase proenzyme (292 aa).

Active-site charge relay system; for autoendoproteolytic cleavage activity residues include Asp-92, His-149, and Ser-255. Residue Ser-255 is the Schiff-base intermediate with substrate; via pyruvic acid; for decarboxylase activity of the active site. Ser-255 carries the post-translational modification Pyruvic acid (Ser); by autocatalysis.

Belongs to the phosphatidylserine decarboxylase family. PSD-B subfamily. Prokaryotic type I sub-subfamily. In terms of assembly, heterodimer of a large membrane-associated beta subunit and a small pyruvoyl-containing alpha subunit. Pyruvate serves as cofactor. Post-translationally, is synthesized initially as an inactive proenzyme. Formation of the active enzyme involves a self-maturation process in which the active site pyruvoyl group is generated from an internal serine residue via an autocatalytic post-translational modification. Two non-identical subunits are generated from the proenzyme in this reaction, and the pyruvate is formed at the N-terminus of the alpha chain, which is derived from the carboxyl end of the proenzyme. The autoendoproteolytic cleavage occurs by a canonical serine protease mechanism, in which the side chain hydroxyl group of the serine supplies its oxygen atom to form the C-terminus of the beta chain, while the remainder of the serine residue undergoes an oxidative deamination to produce ammonia and the pyruvoyl prosthetic group on the alpha chain. During this reaction, the Ser that is part of the protease active site of the proenzyme becomes the pyruvoyl prosthetic group, which constitutes an essential element of the active site of the mature decarboxylase.

The protein resides in the cell membrane. The enzyme catalyses a 1,2-diacyl-sn-glycero-3-phospho-L-serine + H(+) = a 1,2-diacyl-sn-glycero-3-phosphoethanolamine + CO2. Its pathway is phospholipid metabolism; phosphatidylethanolamine biosynthesis; phosphatidylethanolamine from CDP-diacylglycerol: step 2/2. Functionally, catalyzes the formation of phosphatidylethanolamine (PtdEtn) from phosphatidylserine (PtdSer). This Idiomarina loihiensis (strain ATCC BAA-735 / DSM 15497 / L2-TR) protein is Phosphatidylserine decarboxylase proenzyme.